The chain runs to 98 residues: Small ribosomal subunit protein bS20 (98 aa).

Over residues 1–12 (MAPRKPSKKVGP) the composition is skewed to basic residues. Residues 1–34 (MAPRKPSKKVGPQKRPSAEKRVITSKKKQLRNQS) form a disordered region.

Belongs to the bacterial ribosomal protein bS20 family.

In terms of biological role, binds directly to 16S ribosomal RNA. In Chlamydia muridarum (strain MoPn / Nigg), this protein is Small ribosomal subunit protein bS20.